Here is a 141-residue protein sequence, read N- to C-terminus: Hemoglobin subunit alpha (141 aa).

Positions 1–141 (VLSAADKTNV…VSTVLTSKYR (141 aa)) constitute a Globin domain. A Phosphoserine modification is found at serine 3. Lysine 7 is subject to N6-succinyllysine. Threonine 8 carries the phosphothreonine modification. Position 11 is an N6-succinyllysine (lysine 11). An N6-acetyllysine; alternate modification is found at lysine 16. Lysine 16 bears the N6-succinyllysine; alternate mark. The residue at position 35 (serine 35) is a Phosphoserine. Lysine 40 bears the N6-succinyllysine mark. Phosphoserine is present on serine 49. An O2-binding site is contributed by histidine 58. Histidine 87 serves as a coordination point for heme b. Serine 102 is subject to Phosphoserine. Threonine 108 carries the post-translational modification Phosphothreonine. Residues serine 124 and serine 131 each carry the phosphoserine modification. Threonine 134 and threonine 137 each carry phosphothreonine. Serine 138 carries the post-translational modification Phosphoserine.

This sequence belongs to the globin family. Heterotetramer of two alpha chains and two beta chains. In terms of tissue distribution, red blood cells.

Its function is as follows. Involved in oxygen transport from the lung to the various peripheral tissues. In Sciurus carolinensis (Eastern gray squirrel), this protein is Hemoglobin subunit alpha.